Reading from the N-terminus, the 310-residue chain is Ornithine carbamoyltransferase (310 aa).

Carbamoyl phosphate contacts are provided by residues 56-59 (STRT), Gln83, Arg107, and 134-137 (HPCQ). L-ornithine contacts are provided by residues Asn165, Asp229, and 233–234 (SM). Residues 269 to 270 (CL) and Arg297 contribute to the carbamoyl phosphate site.

The protein belongs to the aspartate/ornithine carbamoyltransferase superfamily. OTCase family.

Its subcellular location is the cytoplasm. The catalysed reaction is carbamoyl phosphate + L-ornithine = L-citrulline + phosphate + H(+). The protein operates within amino-acid biosynthesis; L-arginine biosynthesis; L-arginine from L-ornithine and carbamoyl phosphate: step 1/3. Reversibly catalyzes the transfer of the carbamoyl group from carbamoyl phosphate (CP) to the N(epsilon) atom of ornithine (ORN) to produce L-citrulline. This Symbiobacterium thermophilum (strain DSM 24528 / JCM 14929 / IAM 14863 / T) protein is Ornithine carbamoyltransferase.